Here is a 316-residue protein sequence, read N- to C-terminus: Porphobilinogen deaminase (316 aa).

Cys245 carries the S-(dipyrrolylmethanemethyl)cysteine modification.

This sequence belongs to the HMBS family. As to quaternary structure, monomer. Dipyrromethane is required as a cofactor.

It carries out the reaction 4 porphobilinogen + H2O = hydroxymethylbilane + 4 NH4(+). The protein operates within porphyrin-containing compound metabolism; protoporphyrin-IX biosynthesis; coproporphyrinogen-III from 5-aminolevulinate: step 2/4. It participates in porphyrin-containing compound metabolism; chlorophyll biosynthesis. Its function is as follows. Tetrapolymerization of the monopyrrole PBG into the hydroxymethylbilane pre-uroporphyrinogen in several discrete steps. The polypeptide is Porphobilinogen deaminase (Prochlorococcus marinus subsp. pastoris (strain CCMP1986 / NIES-2087 / MED4)).